Reading from the N-terminus, the 265-residue chain is MILEKIKEKKREEIRQLLLTANVAHMKKKILELPPARDFRKALYNQGQVSLIAEIKKASPSKGLLCPNFDHRQLAHIYQSNGAAALSVLTDENFFLGKLTYLEEIKQQSSLPLLRKDFILDPVQLYQSRLAGADAVLLIAGLLTPGELSQLFLLCREIGMQALVEVHTQEELQRVLTTDAKLIGINNRDLSTFQTNLATTAKLLEQVQIEDITIVSESGIAQKEDIKFLKSLGVHGVLVGEALVTAQDIAKKVQEIVVAGGRGEA.

This sequence belongs to the TrpC family.

It carries out the reaction 1-(2-carboxyphenylamino)-1-deoxy-D-ribulose 5-phosphate + H(+) = (1S,2R)-1-C-(indol-3-yl)glycerol 3-phosphate + CO2 + H2O. It functions in the pathway amino-acid biosynthesis; L-tryptophan biosynthesis; L-tryptophan from chorismate: step 4/5. This is Indole-3-glycerol phosphate synthase from Desulforamulus reducens (strain ATCC BAA-1160 / DSM 100696 / MI-1) (Desulfotomaculum reducens).